The chain runs to 528 residues: DNA primase large subunit (528 aa).

Positions 210–239 (NEEHQRKQYFQQEKFIKLPFENVIELVGNR) are H-T-H-like motif. 4 residues coordinate [4Fe-4S] cluster: Cys-336, Cys-417, Cys-434, and Cys-474.

This sequence belongs to the eukaryotic-type primase large subunit family. As to quaternary structure, DNA polymerase alpha:primase is a four subunit enzyme complex, which is assembled throughout the cell cycle, and consists of the two DNA polymerase subunits A POL1 and B POL12, and the DNA primase large PRI2 and small PRI1 subunits. Interacts with MCM10. [4Fe-4S] cluster is required as a cofactor.

DNA primase is the polymerase that synthesizes small RNA primers for the Okazaki fragments made during discontinuous DNA replication. In a complex with DNA polymerase alpha (DNA polymerase alpha:primase) constitutes a replicative polymerase. Both primase components participate in formation of the active center, but the ATP-binding site is exclusively located on p48. This Saccharomyces cerevisiae (strain ATCC 204508 / S288c) (Baker's yeast) protein is DNA primase large subunit (PRI2).